Reading from the N-terminus, the 114-residue chain is UPF0757 protein YmgG (114 aa).

Belongs to the UPF0757 family.

This Edwardsiella ictaluri (strain 93-146) protein is UPF0757 protein YmgG.